We begin with the raw amino-acid sequence, 445 residues long: C-terminal-binding protein 2 (445 aa).

The residue at position 22 (R22) is an Asymmetric dimethylarginine. NAD(+) is bound by residues S106, I186 to T191, D210, C243 to N249, A270 to R272, and D296. R272 is an active-site residue. The active site involves E301. Catalysis depends on H321, which acts as the Proton donor. H321–W324 lines the NAD(+) pocket. Positions T414–Q445 are disordered. A Phosphoserine; by HIPK2 modification is found at S428. Positions K434–Q445 are enriched in basic and acidic residues.

Belongs to the D-isomer specific 2-hydroxyacid dehydrogenase family. In terms of assembly, interacts with HIPK2, ZNF217 and PNN. Interacts with the transcription factors BKLF, delta EF1/AREB6/ZEB, EVI-1 and Friend of GATA (FOG) via the consensus motif P-X-[DNS]-L-[STVA]. Can form a complex with BKLF on a CACCC-box oligonucleotide. Can form homodimers or heterodimers of CTBP1 and CTBP2. Interacts with NRIP1 and WIZ. Interacts with PRDM16; represses white adipose tissue (WAT)-specific genes expression. Interacts with MCRIP1. Post-translationally, phosphorylation by HIPK2 on Ser-428 induces proteasomal degradation. Isoform 2 is specifically localized in synaptic ribbon (at protein level).

It localises to the nucleus. The protein localises to the synapse. Its function is as follows. Corepressor targeting diverse transcription regulators. Functions in brown adipose tissue (BAT) differentiation. Isoform 2 probably acts as a scaffold for specialized synapses. The polypeptide is C-terminal-binding protein 2 (Ctbp2) (Rattus norvegicus (Rat)).